We begin with the raw amino-acid sequence, 505 residues long: Histidine ammonia-lyase (505 aa).

The segment at residues 141 to 143 is a cross-link (5-imidazolinone (Ala-Gly)); it reads ASG. The residue at position 142 (serine 142) is a 2,3-didehydroalanine (Ser).

This sequence belongs to the PAL/histidase family. Contains an active site 4-methylidene-imidazol-5-one (MIO), which is formed autocatalytically by cyclization and dehydration of residues Ala-Ser-Gly.

It localises to the cytoplasm. The catalysed reaction is L-histidine = trans-urocanate + NH4(+). It participates in amino-acid degradation; L-histidine degradation into L-glutamate; N-formimidoyl-L-glutamate from L-histidine: step 1/3. The chain is Histidine ammonia-lyase from Bacillus thuringiensis subsp. konkukian (strain 97-27).